The sequence spans 354 residues: uncharacterized protein (354 aa).

The region spanning 48 to 285 is the ABC transporter domain; it reads VETWEISKIY…DEGYEVVLKG (238 aa). Residue 87–94 coordinates ATP; it reads GPNGAGKT.

Belongs to the ABC transporter superfamily.

This is an uncharacterized protein from Synechocystis sp. (strain ATCC 27184 / PCC 6803 / Kazusa).